A 134-amino-acid polypeptide reads, in one-letter code: Cytochrome b5 isoform E (134 aa).

The Cytochrome b5 heme-binding domain maps to 5–81 (RKVLSFEEVS…MDKYFIGEID (77 aa)). 2 residues coordinate heme: H40 and H64. The helical transmembrane segment at 107–127 (FIIKILQFLVPILILGLALVV) threads the bilayer. The short motif at 128–134 (RHYTKKD) is the AKR2A-binding sequence (ABS) required for endoplasmic reticulum membrane targeting element.

Belongs to the cytochrome b5 family. In terms of assembly, interacts with CER1, BI-1, FAH1 and FAH2. Interacts with AKR2A. Expressed in roots, stems, leaves, flowers and siliques.

It is found in the cell membrane. It localises to the endoplasmic reticulum membrane. In terms of biological role, membrane bound hemoprotein which function as an electron carrier for several membrane bound oxygenases, including fatty acid desaturases. In Arabidopsis thaliana (Mouse-ear cress), this protein is Cytochrome b5 isoform E (CYTB5-E).